A 720-amino-acid chain; its full sequence is MPNTTEEQSDEVNNLALEKCLKVLQEAQTDNEQFAALLLVTKCAQAQEINNETRRRIFDAVGFTFPNRLLFSNSVPEGCPQNLFKSLGITLLACFSTDPVLAVHPQVVNKIPIFNETINISCQSGNKEVVSMVEDAYQCLLGILASPQGPKNLLSHGSIPYLCQAYMNRNHFWEKALQILTSLLTVLPPKCWKKSCTDLQLLLTRLSEEFGKEEGEWKFQLADLLPIFLPPSPILLETSWGKQCLKQLCKGLLKILSNKLSISQRDPALKLAACLANSYGSSWIMAENKVVRSRFLALIVNLACVEVRMALEEPEPLTSRQSVITACYALVEMGILACTKEEKHPVLGKEQKLQLIGVMQEACAAIIYYLQQVGWEKQEDPFLLASVRLLGAWLAEETACLKLEVIQLLPFLVHYMRTCHQRSVICSKLPKEVSQVALLSNSWGNIWPGDAIRFLLPALCHLSAEEVPRKVLISEGVPALLCDYFQLQWDVLFAEDEPEGLQSAAELSLQTCCGVFLNLVVTEPTFVGQESCFVSLMKLLMQSLPTLLTKEGHLVLVANFSTLGLMMSRLLAENSVLHESNAEEFFKAAIHFLSHSHVPSCQTDAGKPVITLSESYSEAWEEISELWFLGVQAFSSCVHLLPWLSALVLRSSWLQDTLCLLDNVSPKSVDSDLVTALQGMLTELAQSSSCCRDVIREKGGAEKANLYGMAALEQCLAELS.

Belongs to the neurochondrin family.

Its subcellular location is the cytoplasm. The protein localises to the cytosol. The protein resides in the cell projection. It localises to the dendrite. It is found in the postsynapse. Probably involved in signal transduction, in the nervous system. Required for the spatial learning process. May also be involved in neurite outgrowth. This chain is Neurochondrin (ncdn), found in Xenopus laevis (African clawed frog).